The chain runs to 639 residues: Chaperone protein DnaK (639 aa).

Thr198 bears the Phosphothreonine; by autocatalysis mark. A disordered region spans residues 602 to 639 (QAKSQAQGGDNADAGKQANATADDVVDAEFEEVKDDKK). A compositionally biased stretch (acidic residues) spans 625–639 (DVVDAEFEEVKDDKK).

The protein belongs to the heat shock protein 70 family.

Acts as a chaperone. The chain is Chaperone protein DnaK from Shewanella baltica (strain OS155 / ATCC BAA-1091).